Here is a 310-residue protein sequence, read N- to C-terminus: N-acetyl-gamma-glutamyl-phosphate reductase (310 aa).

The active site involves cysteine 117.

It belongs to the NAGSA dehydrogenase family. Type 2 subfamily.

The protein resides in the cytoplasm. It carries out the reaction N-acetyl-L-glutamate 5-semialdehyde + phosphate + NADP(+) = N-acetyl-L-glutamyl 5-phosphate + NADPH + H(+). It participates in amino-acid biosynthesis; L-arginine biosynthesis; N(2)-acetyl-L-ornithine from L-glutamate: step 3/4. Functionally, catalyzes the NADPH-dependent reduction of N-acetyl-5-glutamyl phosphate to yield N-acetyl-L-glutamate 5-semialdehyde. The sequence is that of N-acetyl-gamma-glutamyl-phosphate reductase from Rhizobium leguminosarum bv. trifolii (strain WSM2304).